A 466-amino-acid polypeptide reads, in one-letter code: 23S rRNA (uracil(1939)-C(5))-methyltransferase RlmD (466 aa).

Residues 11 to 69 (KITDTKHKEIVINRLDHLGAGIGHLNNKSIFVDGLLPGEKALVQITDDKKQYARAKVIK) form the TRAM domain. Positions 82, 88, 91, and 184 each coordinate [4Fe-4S] cluster. The S-adenosyl-L-methionine site is built by Gln287, Phe316, Asn321, Glu337, Asn364, and Asp385. Cys411 (nucleophile) is an active-site residue.

The protein belongs to the class I-like SAM-binding methyltransferase superfamily. RNA M5U methyltransferase family. RlmD subfamily.

It carries out the reaction uridine(1939) in 23S rRNA + S-adenosyl-L-methionine = 5-methyluridine(1939) in 23S rRNA + S-adenosyl-L-homocysteine + H(+). Catalyzes the formation of 5-methyl-uridine at position 1939 (m5U1939) in 23S rRNA. This is 23S rRNA (uracil(1939)-C(5))-methyltransferase RlmD from Photobacterium profundum (strain SS9).